The following is a 757-amino-acid chain: RNA-directed RNA polymerase catalytic subunit (757 aa).

Residues 50 to 82 (SEKGKWTTNTETGAPQLNPIDGPLPEDNEPSGY) form a disordered region. Residues 55–64 (WTTNTETGAP) show a composition bias toward polar residues. 2 short sequence motifs (nuclear localization signal) span residues 187 to 195 (RKRRVRDNM) and 203 to 216 (RTIG…NKKG). Residues 249-256 (RGFVYFVE) form a promoter-binding site region. Residues 286 to 483 (VRKMMTNSQD…GINMSKKKSY (198 aa)) form the RdRp catalytic domain.

It belongs to the influenza viruses polymerase PB1 family. In terms of assembly, influenza RNA polymerase is composed of three subunits: PB1, PB2 and PA. Interacts (via N-terminus) with PA (via C-terminus). Interacts (via C-terminus) with PB2 (via N-terminus); this interaction is essential for transcription initiation. In terms of processing, phosphorylated by host PRKCA.

The protein localises to the host nucleus. Its subcellular location is the host cytoplasm. The catalysed reaction is RNA(n) + a ribonucleoside 5'-triphosphate = RNA(n+1) + diphosphate. Functionally, RNA-dependent RNA polymerase which is responsible for replication and transcription of virus RNA segments. The transcription of viral mRNAs occurs by a unique mechanism called cap-snatching. 5' methylated caps of cellular mRNAs are cleaved after 10-13 nucleotides by PA. In turn, these short capped RNAs are used as primers by PB1 for transcription of viral mRNAs. During virus replication, PB1 initiates RNA synthesis and copy vRNA into complementary RNA (cRNA) which in turn serves as a template for the production of more vRNAs. The protein is RNA-directed RNA polymerase catalytic subunit of Influenza A virus (strain A/Gull/Minnesota/945/1980 H13N6).